Consider the following 46-residue polypeptide: Protein PsbN (46 aa).

A helical membrane pass occupies residues 7-27 (ALSVAIGVLAVLFGLTGFGVY).

It belongs to the PsbN family.

The protein localises to the cellular thylakoid membrane. Functionally, may play a role in photosystem I and II biogenesis. The polypeptide is Protein PsbN (Synechococcus sp. (strain CC9605)).